A 184-amino-acid polypeptide reads, in one-letter code: MDLTGKLLIAMPGMGDPRFERSVIFLCSHGEDGAMGLIVNKPADLNVSTLLEQLEIPSSSAAAARAPVRLGGPVEMARGFVLHSPDYAGKLQSLKVSDGFVMTATLDILEDIARDNGPARAALMLGYSGWGPGQLEAEIGDNGWLTADADPDIVFGSRDDGKWEAALKLLGIDALLLSASAGHA.

Belongs to the UPF0301 (AlgH) family.

The sequence is that of UPF0301 protein SPO0296 from Ruegeria pomeroyi (strain ATCC 700808 / DSM 15171 / DSS-3) (Silicibacter pomeroyi).